The primary structure comprises 25 residues: Cruzioseptin-13 (25 aa).

N25 is subject to Asparagine amide.

Expressed by the skin glands.

Its subcellular location is the secreted. Its function is as follows. Has antimicrobial activity. In Cruziohyla calcarifer (Splendid leaf frog), this protein is Cruzioseptin-13.